Reading from the N-terminus, the 705-residue chain is Elongation factor G (705 aa).

The tr-type G domain maps to Glu8–Ala290. GTP-binding positions include Ala17–Thr24, Asp88–His92, and Asn142–Asp145. Positions Ala290–Ala309 are disordered.

This sequence belongs to the TRAFAC class translation factor GTPase superfamily. Classic translation factor GTPase family. EF-G/EF-2 subfamily.

It localises to the cytoplasm. Its function is as follows. Catalyzes the GTP-dependent ribosomal translocation step during translation elongation. During this step, the ribosome changes from the pre-translocational (PRE) to the post-translocational (POST) state as the newly formed A-site-bound peptidyl-tRNA and P-site-bound deacylated tRNA move to the P and E sites, respectively. Catalyzes the coordinated movement of the two tRNA molecules, the mRNA and conformational changes in the ribosome. This chain is Elongation factor G, found in Xanthomonas axonopodis pv. citri (strain 306).